The primary structure comprises 44 residues: Cytochrome b559 subunit beta (44 aa).

A helical membrane pass occupies residues 19–35; that stretch reads WVSIHALAVPTIFFLGS. Heme is bound at residue H23.

Belongs to the PsbE/PsbF family. In terms of assembly, heterodimer of an alpha subunit and a beta subunit. PSII is composed of 1 copy each of membrane proteins PsbA, PsbB, PsbC, PsbD, PsbE, PsbF, PsbH, PsbI, PsbJ, PsbK, PsbL, PsbM, PsbT, PsbX, PsbY, PsbZ, Psb30/Ycf12, at least 3 peripheral proteins of the oxygen-evolving complex and a large number of cofactors. It forms dimeric complexes. Heme b serves as cofactor.

It is found in the plastid. The protein resides in the chloroplast thylakoid membrane. Functionally, this b-type cytochrome is tightly associated with the reaction center of photosystem II (PSII). PSII is a light-driven water:plastoquinone oxidoreductase that uses light energy to abstract electrons from H(2)O, generating O(2) and a proton gradient subsequently used for ATP formation. It consists of a core antenna complex that captures photons, and an electron transfer chain that converts photonic excitation into a charge separation. The polypeptide is Cytochrome b559 subunit beta (Chlamydomonas moewusii (Chlamydomonas eugametos)).